A 270-amino-acid chain; its full sequence is Probable inositol 1-monophosphatase ImpA (270 aa).

Mg(2+) contacts are provided by glutamate 69, aspartate 85, isoleucine 87, and aspartate 88. Glutamate 69 contacts substrate. Residues 87-90 (IDGT), arginine 187, and aspartate 216 contribute to the substrate site. Aspartate 216 is a Mg(2+) binding site.

It belongs to the inositol monophosphatase superfamily. Requires Mg(2+) as cofactor.

The enzyme catalyses a myo-inositol phosphate + H2O = myo-inositol + phosphate. It functions in the pathway polyol metabolism; myo-inositol biosynthesis; myo-inositol from D-glucose 6-phosphate: step 2/2. In terms of biological role, catalyzes the dephosphorylation of inositol 1-phosphate (I-1-P) to yield free myo-inositol, a key metabolite in mycobacteria. The polypeptide is Probable inositol 1-monophosphatase ImpA (impA) (Mycobacterium tuberculosis (strain ATCC 25618 / H37Rv)).